The primary structure comprises 422 residues: Probable isoprenylcysteine alpha-carbonyl methylesterase ICMEL2 (422 aa).

A compositionally biased stretch (basic and acidic residues) spans 1–16 (MQLSPERCRPMSENRE). Residues 1-55 (MQLSPERCRPMSENREAWSANSEEMELLHGSNRLSSPEHVRRRVSGNSSEDGSPR) are disordered. Transmembrane regions (helical) follow at residues 97 to 117 (LLALACYAMLLMPGFLQVAYL) and 152 to 172 (VVVFVTGGAWIIGYKAWGSLL). Substrate contacts are provided by residues 158-160 (GGA) and 229-231 (QSA). Residues Ser-230, Asp-331, and His-363 contribute to the active site.

The protein belongs to the AB hydrolase superfamily. Isoprenylcysteine methylesterase family. In terms of tissue distribution, expressed at low levels in flowers and siliques.

It is found in the endoplasmic reticulum membrane. The protein localises to the golgi apparatus membrane. The catalysed reaction is [protein]-C-terminal S-[(2E,6E)-farnesyl]-L-cysteine methyl ester + H2O = [protein]-C-terminal S-[(2E,6E)-farnesyl]-L-cysteine + methanol + H(+). Catalyzes the demethylation of isoprenylcysteine methylesters. May act as a negative regulator of ABA signaling. This chain is Probable isoprenylcysteine alpha-carbonyl methylesterase ICMEL2, found in Arabidopsis thaliana (Mouse-ear cress).